The following is a 424-amino-acid chain: Bone morphogenetic protein 10 (424 aa).

An N-terminal signal peptide occupies residues 1–21 (MGSLVLTLCALFCLAAYLVSG). Positions 22 to 316 (SPIMNLEQSP…IYDSTARIRR (295 aa)) are excised as a propeptide. N-linked (GlcNAc...) asparagine glycans are attached at residues Asn67 and Asn131. 3 disulfides stabilise this stretch: Cys323-Cys389, Cys352-Cys421, and Cys356-Cys423.

This sequence belongs to the TGF-beta family. In terms of assembly, homodimer; disulfide-linked. Interacts with FBN1 (via N-terminal domain) and FBN2. Interacts with ENG. As to expression, detected in mammary epithelia (at protein level).

The protein resides in the secreted. In terms of biological role, required for maintaining the proliferative activity of embryonic cardiomyocytes by preventing premature activation of the negative cell cycle regulator CDKN1C/p57KIP and maintaining the required expression levels of cardiogenic factors such as MEF2C and NKX2-5. Acts as a ligand for ACVRL1/ALK1, BMPR1A/ALK3 and BMPR1B/ALK6, leading to activation of SMAD1, SMAD5 and SMAD8 transcription factors. Inhibits endothelial cell migration and growth. May reduce cell migration and cell matrix adhesion in breast cancer cell lines. The chain is Bone morphogenetic protein 10 (BMP10) from Homo sapiens (Human).